The following is an 80-amino-acid chain: ATP synthase subunit c (80 aa).

Helical transmembrane passes span methionine 8–isoleucine 28 and isoleucine 55–isoleucine 75.

It belongs to the ATPase C chain family. As to quaternary structure, F-type ATPases have 2 components, F(1) - the catalytic core - and F(0) - the membrane proton channel. F(1) has five subunits: alpha(3), beta(3), gamma(1), delta(1), epsilon(1). F(0) has three main subunits: a(1), b(2) and c(10-14). The alpha and beta chains form an alternating ring which encloses part of the gamma chain. F(1) is attached to F(0) by a central stalk formed by the gamma and epsilon chains, while a peripheral stalk is formed by the delta and b chains.

The protein localises to the cell inner membrane. In terms of biological role, f(1)F(0) ATP synthase produces ATP from ADP in the presence of a proton or sodium gradient. F-type ATPases consist of two structural domains, F(1) containing the extramembraneous catalytic core and F(0) containing the membrane proton channel, linked together by a central stalk and a peripheral stalk. During catalysis, ATP synthesis in the catalytic domain of F(1) is coupled via a rotary mechanism of the central stalk subunits to proton translocation. Its function is as follows. Key component of the F(0) channel; it plays a direct role in translocation across the membrane. A homomeric c-ring of between 10-14 subunits forms the central stalk rotor element with the F(1) delta and epsilon subunits. The chain is ATP synthase subunit c from Aeromonas salmonicida (strain A449).